The following is a 415-amino-acid chain: Glutamyl-tRNA reductase (415 aa).

Substrate-binding positions include 49–52 (TCNR), Ser-104, 109–111 (EPQ), and Gln-115. Residue Cys-50 is the Nucleophile of the active site. 184–189 (GAGEMI) contacts NADP(+).

The protein belongs to the glutamyl-tRNA reductase family. As to quaternary structure, homodimer.

The enzyme catalyses (S)-4-amino-5-oxopentanoate + tRNA(Glu) + NADP(+) = L-glutamyl-tRNA(Glu) + NADPH + H(+). It functions in the pathway porphyrin-containing compound metabolism; protoporphyrin-IX biosynthesis; 5-aminolevulinate from L-glutamyl-tRNA(Glu): step 1/2. In terms of biological role, catalyzes the NADPH-dependent reduction of glutamyl-tRNA(Glu) to glutamate 1-semialdehyde (GSA). In Neisseria gonorrhoeae (strain ATCC 700825 / FA 1090), this protein is Glutamyl-tRNA reductase.